Here is a 466-residue protein sequence, read N- to C-terminus: Putative chitinase 2 (466 aa).

A signal peptide spans Met1–Gly17. One can recognise a GH18 domain in the interval Phe20–Tyr380. Cys24 and Cys49 form a disulfide bridge. The active-site Proton donor is Glu141. A coiled-coil region spans residues Tyr395–Gln447.

The protein belongs to the glycosyl hydrolase 18 family. In terms of tissue distribution, prismatic layer of shell (at protein level). Expressed primarily in the mantle with highest level in the mantle edge and lower level in the mantle pallium.

It is found in the secreted. The catalysed reaction is Random endo-hydrolysis of N-acetyl-beta-D-glucosaminide (1-&gt;4)-beta-linkages in chitin and chitodextrins.. In Margaritifera margaritifera (Freshwater pearl mussel), this protein is Putative chitinase 2.